Reading from the N-terminus, the 360-residue chain is Phenylalanine--tRNA ligase alpha subunit (360 aa).

Glu260 is a binding site for Mg(2+).

It belongs to the class-II aminoacyl-tRNA synthetase family. Phe-tRNA synthetase alpha subunit type 1 subfamily. In terms of assembly, tetramer of two alpha and two beta subunits. It depends on Mg(2+) as a cofactor.

The protein localises to the cytoplasm. The enzyme catalyses tRNA(Phe) + L-phenylalanine + ATP = L-phenylalanyl-tRNA(Phe) + AMP + diphosphate + H(+). The protein is Phenylalanine--tRNA ligase alpha subunit of Afipia carboxidovorans (strain ATCC 49405 / DSM 1227 / KCTC 32145 / OM5) (Oligotropha carboxidovorans).